Here is a 196-residue protein sequence, read N- to C-terminus: UPF0340 protein TT_C0214 (196 aa).

Belongs to the UPF0340 family.

The sequence is that of UPF0340 protein TT_C0214 from Thermus thermophilus (strain ATCC BAA-163 / DSM 7039 / HB27).